The sequence spans 178 residues: Interleukin-10 (178 aa).

The signal sequence occupies residues 1–18; it reads MHSSALLCCLVFLAGVAA. 2 cysteine pairs are disulfide-bonded: Cys30–Cys126 and Cys80–Cys132. N-linked (GlcNAc...) asparagine glycosylation occurs at Asn134.

This sequence belongs to the IL-10 family. Homodimer. Interacts with IL10RA and IL10RB.

It is found in the secreted. In terms of biological role, major immune regulatory cytokine that acts on many cells of the immune system where it has profound anti-inflammatory functions, limiting excessive tissue disruption caused by inflammation. Mechanistically, IL10 binds to its heterotetrameric receptor comprising IL10RA and IL10RB leading to JAK1 and STAT2-mediated phosphorylation of STAT3. In turn, STAT3 translocates to the nucleus where it drives expression of anti-inflammatory mediators. Targets antigen-presenting cells (APCs) such as macrophages and monocytes and inhibits their release of pro-inflammatory cytokines including granulocyte-macrophage colony-stimulating factor /GM-CSF, granulocyte colony-stimulating factor/G-CSF, IL-1 alpha, IL-1 beta, IL-6, IL-8 and TNF-alpha. Also interferes with antigen presentation by reducing the expression of MHC-class II and co-stimulatory molecules, thereby inhibiting their ability to induce T cell activation. In addition, controls the inflammatory response of macrophages by reprogramming essential metabolic pathways including mTOR signaling. This is Interleukin-10 (IL10) from Bos taurus (Bovine).